The following is a 454-amino-acid chain: MKTIIEPFRIKSVEPIRLTSRPERERLARAAGYNLFGLHSDDVLIDLLTDSGTGAMSSLQWAAVMQGDESYAGSPSFFRFEAAVQNLMPFKHIIPTHQGRAAEAILFSIFGGKGRRIPSNTHFDTTRGNIEASGATGDDLVIAEGKDPQNLHPFKGNMDLARLEAYLEAHHAEVPLVMITITNNAGGGQPVSLANIRAVADLAHRYGKPFVIDGCRFAENAWFIKTREEGQADRSIPEIVRDCFAVADGMTMSAKKDAFGNIGGWLALNDDDLAEEARGHLIRTEGFPTYGGLAGRDLDALAQGLVEIVDEDYLRYRIRTHQYIVERLDAMGVPVVKPAGGHAVFIDARAWLSHIPPLEYPGQALAVALYEIAGVRSCEIGTAMFGRQPDGSEKPAAMDLVRLAFPRRTYTQSHADYIVEAFEELAATKDALRGYRIVKEPKLMRHFTCRFEKL.

An N6-(pyridoxal phosphate)lysine modification is found at lysine 256.

Belongs to the beta-eliminating lyase family. In terms of assembly, homotetramer. Pyridoxal 5'-phosphate serves as cofactor.

It carries out the reaction L-tryptophan + H2O = indole + pyruvate + NH4(+). It functions in the pathway amino-acid degradation; L-tryptophan degradation via pyruvate pathway; indole and pyruvate from L-tryptophan: step 1/1. This is Tryptophanase (tnaA) from Rhodobacter capsulatus (Rhodopseudomonas capsulata).